A 275-amino-acid chain; its full sequence is Large ribosomal subunit protein uL2 (275 aa).

The span at 38 to 53 (NSKAGRNNNGRITTRH) shows a compositional bias: polar residues. Disordered stretches follow at residues 38 to 59 (NSKA…GGHK) and 224 to 257 (AMNP…KGFR).

This sequence belongs to the universal ribosomal protein uL2 family. Part of the 50S ribosomal subunit. Forms a bridge to the 30S subunit in the 70S ribosome.

Its function is as follows. One of the primary rRNA binding proteins. Required for association of the 30S and 50S subunits to form the 70S ribosome, for tRNA binding and peptide bond formation. It has been suggested to have peptidyltransferase activity; this is somewhat controversial. Makes several contacts with the 16S rRNA in the 70S ribosome. This is Large ribosomal subunit protein uL2 from Burkholderia thailandensis (strain ATCC 700388 / DSM 13276 / CCUG 48851 / CIP 106301 / E264).